A 257-amino-acid polypeptide reads, in one-letter code: Snake venom serine protease KN10 (257 aa).

The N-terminal stretch at 1–18 (MVLIRVLANLLILQLSYA) is a signal peptide. Residues 19 to 24 (QKSSEL) constitute a propeptide that is removed on maturation. One can recognise a Peptidase S1 domain in the interval 25–248 (VVGGDECNIN…HLDWIKSIIA (224 aa)). Cystine bridges form between C31–C162, C49–C65, C141–C209, C173–C188, and C199–C224. The active-site Charge relay system is H64. N102 carries N-linked (GlcNAc...) asparagine glycosylation. Catalysis depends on D109, which acts as the Charge relay system. 2 N-linked (GlcNAc...) asparagine glycosylation sites follow: N120 and N121. Residue S203 is the Charge relay system of the active site.

This sequence belongs to the peptidase S1 family. Snake venom subfamily. Monomer. In terms of tissue distribution, expressed by the venom gland.

The protein localises to the secreted. In terms of biological role, snake venom serine protease that may act in the hemostasis system of the prey. In Trimeresurus stejnegeri (Chinese green tree viper), this protein is Snake venom serine protease KN10.